The sequence spans 242 residues: Biosynthetic peptidoglycan transglycosylase (242 aa).

The helical transmembrane segment at 19–39 (LMVVLAVFWGGGIALFSVAPV) threads the bilayer.

The protein belongs to the glycosyltransferase 51 family.

It is found in the cell inner membrane. The enzyme catalyses [GlcNAc-(1-&gt;4)-Mur2Ac(oyl-L-Ala-gamma-D-Glu-L-Lys-D-Ala-D-Ala)](n)-di-trans,octa-cis-undecaprenyl diphosphate + beta-D-GlcNAc-(1-&gt;4)-Mur2Ac(oyl-L-Ala-gamma-D-Glu-L-Lys-D-Ala-D-Ala)-di-trans,octa-cis-undecaprenyl diphosphate = [GlcNAc-(1-&gt;4)-Mur2Ac(oyl-L-Ala-gamma-D-Glu-L-Lys-D-Ala-D-Ala)](n+1)-di-trans,octa-cis-undecaprenyl diphosphate + di-trans,octa-cis-undecaprenyl diphosphate + H(+). It participates in cell wall biogenesis; peptidoglycan biosynthesis. Its function is as follows. Peptidoglycan polymerase that catalyzes glycan chain elongation from lipid-linked precursors. In Escherichia coli O139:H28 (strain E24377A / ETEC), this protein is Biosynthetic peptidoglycan transglycosylase.